A 60-amino-acid chain; its full sequence is uncharacterized protein (60 aa).

Its subcellular location is the host cytoplasm. This is an uncharacterized protein from Escherichia phage Mu (Bacteriophage Mu).